Consider the following 533-residue polypeptide: Flavin-containing monooxygenase 5 (533 aa).

Arg5 is modified (dimethylated arginine). FAD-binding positions include 10 to 14 (GSGAS), Glu33, and 41 to 42 (LW). Ser54 is modified (phosphoserine). Tyr56 is subject to Phosphotyrosine. Phosphoserine is present on Ser58. 62–63 (NT) provides a ligand contact to FAD. 196–199 (SGGD) is a binding site for NADP(+). The residue at position 284 (Thr284) is a Phosphothreonine. Phosphoserine is present on Ser401. The helical transmembrane segment at 513-533 (LVTVRVLMLAVTFLAVILAYF) threads the bilayer.

Belongs to the FMO family. Requires FAD as cofactor.

It is found in the microsome membrane. The protein localises to the endoplasmic reticulum membrane. The catalysed reaction is N,N-dimethylaniline + NADPH + O2 + H(+) = N,N-dimethylaniline N-oxide + NADP(+) + H2O. The enzyme catalyses NADPH + O2 + H(+) = H2O2 + NADP(+). It carries out the reaction heptan-2-one + NADPH + O2 + H(+) = pentyl acetate + NADP(+) + H2O. It catalyses the reaction octan-3-one + NADPH + O2 + H(+) = pentyl propanoate + NADP(+) + H2O. The catalysed reaction is octan-3-one + NADPH + O2 + H(+) = ethyl hexanoate + NADP(+) + H2O. The enzyme catalyses hexan-3-one + NADPH + O2 + H(+) = ethyl butanoate + NADP(+) + H2O. It carries out the reaction hexan-3-one + NADPH + O2 + H(+) = propyl propanoate + NADP(+) + H2O. It catalyses the reaction heptan-4-one + NADPH + O2 + H(+) = propyl butanoate + NADP(+) + H2O. The catalysed reaction is (2E)-geranial + NADPH + O2 + H(+) = (1E)-2,6-dimethylhepta-1,5-dien-1-yl formate + NADP(+) + H2O. The enzyme catalyses sulcatone + NADPH + O2 + H(+) = 4-methylpent-3-en-1-yl acetate + NADP(+) + H2O. Its function is as follows. Acts as a Baeyer-Villiger monooxygenase on a broad range of substrates. Catalyzes the insertion of an oxygen atom into a carbon-carbon bond adjacent to a carbonyl, which converts ketones to esters. Active on diverse carbonyl compounds, whereas soft nucleophiles are mostly non- or poorly reactive. In contrast with other forms of FMO it is non- or poorly active on 'classical' substrates such as drugs, pesticides, and dietary components containing soft nucleophilic heteroatoms. Able to oxidize drug molecules bearing a carbonyl group on an aliphatic chain, such as nabumetone and pentoxifylline. Also, in the absence of substrates, shows slow but yet significant NADPH oxidase activity. Acts as a positive modulator of cholesterol biosynthesis as well as glucose homeostasis, promoting metabolic aging via pleiotropic effects. This Rattus norvegicus (Rat) protein is Flavin-containing monooxygenase 5.